Here is a 384-residue protein sequence, read N- to C-terminus: Deoxyguanosinetriphosphate triphosphohydrolase-like protein (384 aa).

One can recognise an HD domain in the interval 62–198 (RLTHSLEVST…AALADDISYI (137 aa)).

Belongs to the dGTPase family. Type 2 subfamily.

The protein is Deoxyguanosinetriphosphate triphosphohydrolase-like protein of Rickettsia rickettsii (strain Iowa).